A 197-amino-acid chain; its full sequence is 3-isopropylmalate dehydratase small subunit (197 aa).

This sequence belongs to the LeuD family. LeuD type 1 subfamily. As to quaternary structure, heterodimer of LeuC and LeuD.

It carries out the reaction (2R,3S)-3-isopropylmalate = (2S)-2-isopropylmalate. It participates in amino-acid biosynthesis; L-leucine biosynthesis; L-leucine from 3-methyl-2-oxobutanoate: step 2/4. Catalyzes the isomerization between 2-isopropylmalate and 3-isopropylmalate, via the formation of 2-isopropylmaleate. This is 3-isopropylmalate dehydratase small subunit from Mycobacterium sp. (strain KMS).